Here is a 135-residue protein sequence, read N- to C-terminus: Large ribosomal subunit protein uL16 (135 aa).

The protein belongs to the universal ribosomal protein uL16 family. In terms of assembly, part of the 50S ribosomal subunit.

In terms of biological role, binds 23S rRNA and is also seen to make contacts with the A and possibly P site tRNAs. The polypeptide is Large ribosomal subunit protein uL16 (rplP) (Carsonella ruddii (strain PV)).